The sequence spans 502 residues: Regulator of hypoxia-inducible factor 1 (502 aa).

11 helical membrane-spanning segments follow: residues 54–74, 92–112, 138–158, 188–208, 241–261, 272–292, 335–355, 367–387, 396–416, 437–457, and 465–485; these read LLAW…VFSC, LDVL…NHTG, IFGA…VLSG, LAPS…NALL, MGYL…PIFL, MALT…YCTA, GPFL…YIMV, LIVA…PNAG, TAVF…ALYF, AYLL…LQAA, and LVLP…YLFI.

Expressed in intestine, some sensory neurons in the head, body wall muscles and socket cells.

It is found in the endoplasmic reticulum membrane. Involved in the response to variation in environmental oxygen levels by inhibiting hif-1-mediated gene transcription in a vhl-1-independent manner. Plays a role in susceptibility to killing mediated by P.aeruginosa and by pore-forming toxins produced by B.thuringiensis. Probably by preventing hif-1 transcriptional activity, regulates behavioral responses, such as locomotion speed following acute reoxygenation. Plays a role in normal egg-laying probably by regulating spermatogenesis and in body morphogenesis. This Caenorhabditis elegans protein is Regulator of hypoxia-inducible factor 1.